Reading from the N-terminus, the 481-residue chain is Tripartite motif-containing protein 10 (481 aa).

The segment at 16 to 61 adopts an RING-type zinc-finger fold; it reads CPICQGTLREPVTIDCGHNFCRACLTRYCEIPGPDLEESPTCPLCK. Residues 94-135 form a B box-type zinc finger; the sequence is GEEDVCQEHGEKIYFFCEDDEMQLCVVCREAGEHATHTMRFL. Zn(2+) contacts are provided by Cys99, His102, Cys121, and His127. Positions 142 to 177 form a coiled coil; it reads YREQIHKCLKRLRKEREETQEIQSRENKRMQVLLTQ. The 190-residue stretch at 292–481 folds into the B30.2/SPRY domain; the sequence is REMKMFLEKL…GRGSSFFLSS (190 aa).

This sequence belongs to the TRIM/RBCC family. As to quaternary structure, interacts with IFNAR1; this interaction prevents association of IFNAR1 with TYK2.

Its subcellular location is the cytoplasm. E3 ligase that plays an essential role in the differentiation and survival of terminal erythroid cells. May directly bind to PTEN and promote its ubiquitination, resulting in its proteasomal degradation and activation of hypertrophic signaling. In addition, plays a role in immune response regulation by repressing the phosphorylation of STAT1 and STAT2 in the interferon/JAK/STAT signaling pathway independent of its E3 ligase activity. Mechanistically, interacts with the intracellular domain of IFNAR1 and thereby inhibits the association of TYK2 and IFNAR1. The chain is Tripartite motif-containing protein 10 (TRIM10) from Pan troglodytes (Chimpanzee).